The primary structure comprises 196 residues: ATP-dependent Clp protease proteolytic subunit (196 aa).

The active-site Nucleophile is Ser96. His121 is a catalytic residue.

Belongs to the peptidase S14 family. Fourteen ClpP subunits assemble into 2 heptameric rings which stack back to back to give a disk-like structure with a central cavity, resembling the structure of eukaryotic proteasomes.

The protein localises to the cytoplasm. It catalyses the reaction Hydrolysis of proteins to small peptides in the presence of ATP and magnesium. alpha-casein is the usual test substrate. In the absence of ATP, only oligopeptides shorter than five residues are hydrolyzed (such as succinyl-Leu-Tyr-|-NHMec, and Leu-Tyr-Leu-|-Tyr-Trp, in which cleavage of the -Tyr-|-Leu- and -Tyr-|-Trp bonds also occurs).. Its function is as follows. Cleaves peptides in various proteins in a process that requires ATP hydrolysis. Has a chymotrypsin-like activity. Plays a major role in the degradation of misfolded proteins. The protein is ATP-dependent Clp protease proteolytic subunit of Streptococcus pneumoniae (strain 70585).